A 485-amino-acid polypeptide reads, in one-letter code: ETS translocation variant 4 (485 aa).

A Glycyl lysine isopeptide (Lys-Gly) (interchain with G-Cter in SUMO2) cross-link involves residue K6. Disordered regions lie at residues 79-114 (PDFH…RKPP) and 135-214 (IAIK…QHQL). Residue K95 forms a Glycyl lysine isopeptide (Lys-Gly) (interchain with G-Cter in SUMO) linkage. Phosphoserine is present on S100. A Glycyl lysine isopeptide (Lys-Gly) (interchain with G-Cter in SUMO2) cross-link involves residue K138. 2 positions are modified to phosphoserine: S139 and S148. Positions 158 to 171 (QQQSLLRASSSSQS) are enriched in low complexity. At S215 the chain carries Phosphoserine. Glycyl lysine isopeptide (Lys-Gly) (interchain with G-Cter in SUMO) cross-links involve residues K227 and K261. A Glycyl lysine isopeptide (Lys-Gly) (interchain with G-Cter in SUMO2) cross-link involves residue K323. The segment at residues 342–422 (LQLWQFLVAL…AGERYVYKFV (81 aa)) is a DNA-binding region (ETS).

Belongs to the ETS family. Sumoylated; enhanced upon ERK/MAP kinase pathway activation it positively regulates the transcriptional activator capacity. Sumoylation at Lys-95 probably requires phosphorylation at Ser-100. Transiently polysumoylated and desumoylated by SENP1. Sumoylation is a prerequisite to polyubiquitination which in turn increases proteasomal-mediated degradation. Probably polyubiquitinated by RNF4 and deubiquitinated by USP2. As to expression, epididymis and brain.

The protein localises to the nucleus. In terms of biological role, transcriptional activator. May play a role in keratinocyte differentiation. In Mus musculus (Mouse), this protein is ETS translocation variant 4 (Etv4).